Consider the following 325-residue polypeptide: Aspartate carbamoyltransferase catalytic subunit (325 aa).

2 residues coordinate carbamoyl phosphate: R64 and T65. Position 92 (K92) interacts with L-aspartate. Positions 114, 142, and 145 each coordinate carbamoyl phosphate. Residues R176 and R230 each contribute to the L-aspartate site. The carbamoyl phosphate site is built by G271 and P272.

This sequence belongs to the aspartate/ornithine carbamoyltransferase superfamily. ATCase family. In terms of assembly, heterododecamer (2C3:3R2) of six catalytic PyrB chains organized as two trimers (C3), and six regulatory PyrI chains organized as three dimers (R2).

It carries out the reaction carbamoyl phosphate + L-aspartate = N-carbamoyl-L-aspartate + phosphate + H(+). The protein operates within pyrimidine metabolism; UMP biosynthesis via de novo pathway; (S)-dihydroorotate from bicarbonate: step 2/3. Its function is as follows. Catalyzes the condensation of carbamoyl phosphate and aspartate to form carbamoyl aspartate and inorganic phosphate, the committed step in the de novo pyrimidine nucleotide biosynthesis pathway. The sequence is that of Aspartate carbamoyltransferase catalytic subunit from Nitratidesulfovibrio vulgaris (strain DSM 19637 / Miyazaki F) (Desulfovibrio vulgaris).